The sequence spans 548 residues: Formyltransferase/hydrolase complex Fhc subunit A (548 aa).

Zn(2+) contacts are provided by H57, H59, and H227.

The protein belongs to the metallo-dependent hydrolases superfamily. FwdA/FmdA family. As to quaternary structure, octaheteromer. Part of the formyltransferase/hydrolase complex fhc; composed of FhcA, FhcB, FhcC and FhcD. Requires Zn(2+) as cofactor.

Its subcellular location is the cytoplasm. The enzyme catalyses N-formylmethanofuran + H2O = methanofuran + formate. The protein operates within one-carbon metabolism; formaldehyde degradation; formate from formaldehyde (H(4)MPT route): step 4/5. Functionally, involved in the transformation of 5-formyl tetrahydromethanopterin (5-formyl-H(4)MPT) to methanofuran (MFR) and formate via the formylmethanofuran (formyl-MFR). May be catalyze the hydrolysis of formylmethanofuran (formyl-MFR) to yield formate and MFR. The polypeptide is Formyltransferase/hydrolase complex Fhc subunit A (fhcA) (Methylorubrum extorquens (strain ATCC 14718 / DSM 1338 / JCM 2805 / NCIMB 9133 / AM1) (Methylobacterium extorquens)).